The primary structure comprises 240 residues: ATP-dependent Clp protease proteolytic subunit 2 (240 aa).

S132 (nucleophile) is an active-site residue. The active site involves H157.

It belongs to the peptidase S14 family. In terms of assembly, fourteen ClpP subunits assemble into 2 heptameric rings which stack back to back to give a disk-like structure with a central cavity, resembling the structure of eukaryotic proteasomes.

It localises to the cytoplasm. It carries out the reaction Hydrolysis of proteins to small peptides in the presence of ATP and magnesium. alpha-casein is the usual test substrate. In the absence of ATP, only oligopeptides shorter than five residues are hydrolyzed (such as succinyl-Leu-Tyr-|-NHMec, and Leu-Tyr-Leu-|-Tyr-Trp, in which cleavage of the -Tyr-|-Leu- and -Tyr-|-Trp bonds also occurs).. Functionally, cleaves peptides in various proteins in a process that requires ATP hydrolysis. Has a chymotrypsin-like activity. Plays a major role in the degradation of misfolded proteins. This Synechococcus elongatus (strain ATCC 33912 / PCC 7942 / FACHB-805) (Anacystis nidulans R2) protein is ATP-dependent Clp protease proteolytic subunit 2.